The chain runs to 62 residues: KHNFLNHGLSLNLVIKPYLALEGSVAFPAENGVQDTESTQEKRETGDEENSAQFPIGRRDFD.

Residues 23-41 are NGE-like; the sequence is GSVAFPAENGVQDTESTQE. The disordered stretch occupies residues 28 to 62; it reads PAENGVQDTESTQEKRETGDEENSAQFPIGRRDFD. The interval 44–56 is NEI-like; that stretch reads ETGDEENSAQFPI. A melanin-concentrating hormone-like region spans residues 60–62; sequence DFD.

It belongs to the melanin-concentrating hormone family.

This Hylobates lar (Lar gibbon) protein is Pro-MCH variant (PMCHL1).